Here is a 119-residue protein sequence, read N- to C-terminus: Large ribosomal subunit protein bL20 (119 aa).

The protein belongs to the bacterial ribosomal protein bL20 family.

Functionally, binds directly to 23S ribosomal RNA and is necessary for the in vitro assembly process of the 50S ribosomal subunit. It is not involved in the protein synthesizing functions of that subunit. This chain is Large ribosomal subunit protein bL20, found in Heliobacterium modesticaldum (strain ATCC 51547 / Ice1).